The primary structure comprises 210 residues: Proteasome subunit beta (210 aa).

A propeptide spans 1–9 (MNDKNTLKG) (removed in mature form; by autocatalysis). The active-site Nucleophile is the Thr-10.

This sequence belongs to the peptidase T1B family. The 20S proteasome core is composed of 14 alpha and 14 beta subunits that assemble into four stacked heptameric rings, resulting in a barrel-shaped structure. The two inner rings, each composed of seven catalytic beta subunits, are sandwiched by two outer rings, each composed of seven alpha subunits. The catalytic chamber with the active sites is on the inside of the barrel. Has a gated structure, the ends of the cylinder being occluded by the N-termini of the alpha-subunits. Is capped at one or both ends by the proteasome regulatory ATPase, PAN.

It is found in the cytoplasm. The catalysed reaction is Cleavage of peptide bonds with very broad specificity.. The formation of the proteasomal ATPase PAN-20S proteasome complex, via the docking of the C-termini of PAN into the intersubunit pockets in the alpha-rings, triggers opening of the gate for substrate entry. Interconversion between the open-gate and close-gate conformations leads to a dynamic regulation of the 20S proteasome proteolysis activity. Its function is as follows. Component of the proteasome core, a large protease complex with broad specificity involved in protein degradation. The chain is Proteasome subunit beta from Methanothermobacter thermautotrophicus (strain ATCC 29096 / DSM 1053 / JCM 10044 / NBRC 100330 / Delta H) (Methanobacterium thermoautotrophicum).